A 245-amino-acid polypeptide reads, in one-letter code: Aliphatic sulfonates import ATP-binding protein SsuB 1 (245 aa).

The ABC transporter domain occupies 9–227; it reads LDLVGIGHRY…HRGDAQLAAW (219 aa). 41-48 contributes to the ATP binding site; it reads GPSGVGKS.

The protein belongs to the ABC transporter superfamily. Aliphatic sulfonates importer (TC 3.A.1.17.2) family. As to quaternary structure, the complex is composed of two ATP-binding proteins (SsuB), two transmembrane proteins (SsuC) and a solute-binding protein (SsuA).

The protein localises to the cell membrane. The enzyme catalyses ATP + H2O + aliphatic sulfonate-[sulfonate-binding protein]Side 1 = ADP + phosphate + aliphatic sulfonateSide 2 + [sulfonate-binding protein]Side 1.. Functionally, part of the ABC transporter complex SsuABC involved in aliphatic sulfonates import. Responsible for energy coupling to the transport system. The sequence is that of Aliphatic sulfonates import ATP-binding protein SsuB 1 from Rhodococcus jostii (strain RHA1).